The sequence spans 141 residues: MALERTLSIIKPDAVAKNVIGQIYARFEGAGLKIVAAKMIHLSRAEAEQFYAVHKERPFFKDLVDFMISGPVMVQALEGENAIAKNRDLMGATDPKKAEKGTIRADFADSIDANAVHGSDAAETAAVEVAFFFPGLNIYSR.

The ATP site is built by Lys11, Phe59, Arg87, Thr93, Arg104, and Asn114. His117 (pros-phosphohistidine intermediate) is an active-site residue.

This sequence belongs to the NDK family. Homotetramer. Mg(2+) is required as a cofactor.

The protein localises to the cytoplasm. It carries out the reaction a 2'-deoxyribonucleoside 5'-diphosphate + ATP = a 2'-deoxyribonucleoside 5'-triphosphate + ADP. The catalysed reaction is a ribonucleoside 5'-diphosphate + ATP = a ribonucleoside 5'-triphosphate + ADP. Functionally, major role in the synthesis of nucleoside triphosphates other than ATP. The ATP gamma phosphate is transferred to the NDP beta phosphate via a ping-pong mechanism, using a phosphorylated active-site intermediate. The sequence is that of Nucleoside diphosphate kinase from Ralstonia pickettii (strain 12J).